Consider the following 540-residue polypeptide: 2-isopropylmalate synthase (540 aa).

The 262-residue stretch at 8 to 269 (VLIFDTTLRD…YFNPFFGRAE (262 aa)) folds into the Pyruvate carboxyltransferase domain. D17, H208, H210, and N244 together coordinate Mn(2+). A regulatory domain region spans residues 408–540 (QLKLVQVSCG…ATPLDASPTL (133 aa)).

Belongs to the alpha-IPM synthase/homocitrate synthase family. LeuA type 1 subfamily. In terms of assembly, homodimer. Mn(2+) serves as cofactor.

The protein localises to the cytoplasm. The enzyme catalyses 3-methyl-2-oxobutanoate + acetyl-CoA + H2O = (2S)-2-isopropylmalate + CoA + H(+). Its pathway is amino-acid biosynthesis; L-leucine biosynthesis; L-leucine from 3-methyl-2-oxobutanoate: step 1/4. In terms of biological role, catalyzes the condensation of the acetyl group of acetyl-CoA with 3-methyl-2-oxobutanoate (2-ketoisovalerate) to form 3-carboxy-3-hydroxy-4-methylpentanoate (2-isopropylmalate). This Synechococcus sp. (strain WH7803) protein is 2-isopropylmalate synthase.